The primary structure comprises 291 residues: 4-hydroxy-tetrahydrodipicolinate synthase (291 aa).

Position 47 (Thr47) interacts with pyruvate. Residue Tyr136 is the Proton donor/acceptor of the active site. The Schiff-base intermediate with substrate role is filled by Lys164. Ile206 is a pyruvate binding site.

Belongs to the DapA family. In terms of assembly, homotetramer; dimer of dimers.

The protein localises to the cytoplasm. The catalysed reaction is L-aspartate 4-semialdehyde + pyruvate = (2S,4S)-4-hydroxy-2,3,4,5-tetrahydrodipicolinate + H2O + H(+). It participates in amino-acid biosynthesis; L-lysine biosynthesis via DAP pathway; (S)-tetrahydrodipicolinate from L-aspartate: step 3/4. In terms of biological role, catalyzes the condensation of (S)-aspartate-beta-semialdehyde [(S)-ASA] and pyruvate to 4-hydroxy-tetrahydrodipicolinate (HTPA). In Leuconostoc citreum (strain KM20), this protein is 4-hydroxy-tetrahydrodipicolinate synthase.